The sequence spans 312 residues: MEFTHLDENGMVRMADVSGKPPTRRKACASGRIVMLPETIALLRRKELPKGNVLAAAKIAGIQAAKQTSTLIPLCHQLNLSWIDIEFEIGDDSIGIAATVITRESTGVEMEALAAVSVAALTIYDMCKAVDKTMEISAIRLDHKTGGKSSAAEYHPRTAILVMSDSIAAGTATDHSGAILREGLQKAGCAVEALTITPDEPVEIAATVEAWIGEGIEFIVTSGGTGLGPRDLAIDTLAPKFTRRLPGVEQELLRWGQTKTRTAMLSRLAAGVIGNTVVVCLPGSTSAAKDALEVLVPAIFHAFPMLKGDGHA.

The tract at residues 1-155 is molybdenum cofactor biosynthesis protein C; that stretch reads MEFTHLDENG…GGKSSAAEYH (155 aa). Substrate-binding positions include 74–76 and 110–111; these read LCH and ME. Asp-125 is a catalytic residue. The interval 156–312 is molybdenum cofactor biosynthesis protein B; the sequence is PRTAILVMSD…FPMLKGDGHA (157 aa).

In the N-terminal section; belongs to the MoaC family. The protein in the C-terminal section; belongs to the MoaB/Mog family.

The catalysed reaction is (8S)-3',8-cyclo-7,8-dihydroguanosine 5'-triphosphate = cyclic pyranopterin phosphate + diphosphate. Its pathway is cofactor biosynthesis; molybdopterin biosynthesis. In terms of biological role, catalyzes the conversion of (8S)-3',8-cyclo-7,8-dihydroguanosine 5'-triphosphate to cyclic pyranopterin monophosphate (cPMP). This chain is Molybdenum cofactor biosynthesis bifunctional protein (moaCB), found in Chlorobaculum tepidum (strain ATCC 49652 / DSM 12025 / NBRC 103806 / TLS) (Chlorobium tepidum).